Here is a 560-residue protein sequence, read N- to C-terminus: Formate--tetrahydrofolate ligase (560 aa).

69–76 provides a ligand contact to ATP; that stretch reads TPAGEGKS.

This sequence belongs to the formate--tetrahydrofolate ligase family.

The catalysed reaction is (6S)-5,6,7,8-tetrahydrofolate + formate + ATP = (6R)-10-formyltetrahydrofolate + ADP + phosphate. It participates in one-carbon metabolism; tetrahydrofolate interconversion. This chain is Formate--tetrahydrofolate ligase, found in Listeria monocytogenes serotype 4b (strain CLIP80459).